A 280-amino-acid chain; its full sequence is Polyamine aminopropyltransferase (280 aa).

The PABS domain occupies 2-235 (GGWIDEEHRG…GWWSWTFAAV (234 aa)). An S-methyl-5'-thioadenosine-binding site is contributed by Gln-29. Spermidine-binding residues include His-60 and Asp-84. Residues Glu-104 and 136–137 (DG) contribute to the S-methyl-5'-thioadenosine site. The active-site Proton acceptor is the Asp-155. Pro-162 lines the S-methyl-5'-thioadenosine pocket.

It belongs to the spermidine/spermine synthase family. In terms of assembly, homodimer or homotetramer.

It is found in the cytoplasm. It carries out the reaction S-adenosyl 3-(methylsulfanyl)propylamine + putrescine = S-methyl-5'-thioadenosine + spermidine + H(+). The protein operates within amine and polyamine biosynthesis; spermidine biosynthesis; spermidine from putrescine: step 1/1. In terms of biological role, catalyzes the irreversible transfer of a propylamine group from the amino donor S-adenosylmethioninamine (decarboxy-AdoMet) to putrescine (1,4-diaminobutane) to yield spermidine. The chain is Polyamine aminopropyltransferase from Parasynechococcus marenigrum (strain WH8102).